The chain runs to 371 residues: S-adenosylmethionine:tRNA ribosyltransferase-isomerase (371 aa).

The protein belongs to the QueA family. As to quaternary structure, monomer.

It localises to the cytoplasm. It catalyses the reaction 7-aminomethyl-7-carbaguanosine(34) in tRNA + S-adenosyl-L-methionine = epoxyqueuosine(34) in tRNA + adenine + L-methionine + 2 H(+). The protein operates within tRNA modification; tRNA-queuosine biosynthesis. Functionally, transfers and isomerizes the ribose moiety from AdoMet to the 7-aminomethyl group of 7-deazaguanine (preQ1-tRNA) to give epoxyqueuosine (oQ-tRNA). The chain is S-adenosylmethionine:tRNA ribosyltransferase-isomerase from Prochlorococcus marinus (strain MIT 9303).